We begin with the raw amino-acid sequence, 1557 residues long: Probable kinase PglW (1557 aa).

The region spanning 12–130 is the NERD domain; that stretch reads SEFEHERRGL…VAEAVCFTDN (119 aa). Protein kinase domains follow at residues 195 to 490 and 530 to 816; these read ELER…LEVV and WEVR…KVFL. ATP contacts are provided by residues 536 to 544 and K564; that span reads LGTGSTSRA. 2 disordered regions span residues 615–634 and 821–861; these read DERD…RRRE and TVPS…QRDR. A compositionally biased stretch (low complexity) spans 830–849; the sequence is PAAPADGAAPAEGAAAGIAD.

Belongs to the protein kinase superfamily. Ser/Thr protein kinase family.

Its function is as follows. BREX systems (bacteriophage exclusion) provide immunity against bacteriophage. Part of a type 2 BREX system. Previously called the phage growth limitation (Pgl) system, it confers protection against bacteriophage phiC31. The bacteria allows one cycle of phage infection, but subsequent cycles are impaired, protecting the original bacterial colony. The system undergoes high rates (10(-3) to 10(-4)) of phase reversion, i.e. loss and regain of phiC31 resistance. When the pglW-pglX-pglY-pglZ genes are transformed into a susceptible S.lividans (strain 1326) they confer resistance to infection by phage phiC31 and phiBT1; all 4 genes are necessary. The proteins has kinase domains and might bind DNA. Autophosphorylates when synthesized in vitro, cannot be expressed in E.coli. The polypeptide is Probable kinase PglW (Streptomyces coelicolor (strain ATCC BAA-471 / A3(2) / M145)).